Here is a 454-residue protein sequence, read N- to C-terminus: Glutamate--tRNA ligase (454 aa).

Residues 7 to 17 carry the 'HIGH' region motif; it reads PSPTGCLHIGG. Zn(2+) contacts are provided by cysteine 96, cysteine 98, cysteine 123, and aspartate 125. The 'KMSKS' region motif lies at 230–234; it reads RLSKR. Position 233 (lysine 233) interacts with ATP.

It belongs to the class-I aminoacyl-tRNA synthetase family. Glutamate--tRNA ligase type 1 subfamily. As to quaternary structure, monomer. Requires Zn(2+) as cofactor.

Its subcellular location is the cytoplasm. It carries out the reaction tRNA(Glu) + L-glutamate + ATP = L-glutamyl-tRNA(Glu) + AMP + diphosphate. Functionally, catalyzes the attachment of glutamate to tRNA(Glu) in a two-step reaction: glutamate is first activated by ATP to form Glu-AMP and then transferred to the acceptor end of tRNA(Glu). The sequence is that of Glutamate--tRNA ligase from Ruthia magnifica subsp. Calyptogena magnifica.